A 308-amino-acid polypeptide reads, in one-letter code: Olfactory receptor 2T6 (308 aa).

Topologically, residues 1–28 are extracellular; the sequence is MNENNETLTRGFTLMGLFTHNKCSGFFF. N-linked (GlcNAc...) asparagine glycosylation occurs at Asn-5. The helical transmembrane segment at 29-49 threads the bilayer; sequence GVICAVFFMAMIANGVMIFLI. The Cytoplasmic segment spans residues 50-57; sequence NIDPHLHT. The chain crosses the membrane as a helical span at residues 58–78; sequence PMYFLLSHLSVIDTLYISTIV. The Extracellular portion of the chain corresponds to 79–98; that stretch reads PKMLVDYLMGEGTISFIACT. Cys-97 and Cys-179 are joined by a disulfide. A helical transmembrane segment spans residues 99–119; it reads AQCFLYMGFMGAEFFLLGLMA. Over 120-145 the chain is Cytoplasmic; sequence YDRYVAICNPLRYPVLISWRVCWMIL. Residues 146–166 form a helical membrane-spanning segment; sequence ASSWFGGALDSFLLTPITMSL. At 167-203 the chain is on the extracellular side; it reads PFCASHQINHFFCEAPTMLRLACGDKTTYETVMYVCC. The chain crosses the membrane as a helical span at residues 204 to 224; the sequence is VAMLLIPFSVVTASYTRILIT. Topologically, residues 225 to 236 are cytoplasmic; the sequence is VHQMTSAEGRKK. A helical transmembrane segment spans residues 237–257; that stretch reads AFATCSSHMMVVTLFYGAALY. Residues 258–271 lie on the Extracellular side of the membrane; that stretch reads TYTLPQSYHTPIKD. A helical transmembrane segment spans residues 272–292; it reads KVFSAFYTILTPLLNPLIYSL. The Cytoplasmic segment spans residues 293–308; it reads RNRDVMGALKRVVARC.

This sequence belongs to the G-protein coupled receptor 1 family.

It localises to the cell membrane. Functionally, odorant receptor. The protein is Olfactory receptor 2T6 (OR2T6) of Homo sapiens (Human).